Consider the following 404-residue polypeptide: Probable tRNA sulfurtransferase (404 aa).

The THUMP domain maps to 60–165 (QPIVEALKLV…DEAAYISYEE (106 aa)). ATP is bound by residues 183 to 184 (ML), 208 to 209 (HF), Arg-265, Gly-287, and Gln-296.

It belongs to the ThiI family.

The protein localises to the cytoplasm. The catalysed reaction is [ThiI sulfur-carrier protein]-S-sulfanyl-L-cysteine + a uridine in tRNA + 2 reduced [2Fe-2S]-[ferredoxin] + ATP + H(+) = [ThiI sulfur-carrier protein]-L-cysteine + a 4-thiouridine in tRNA + 2 oxidized [2Fe-2S]-[ferredoxin] + AMP + diphosphate. It catalyses the reaction [ThiS sulfur-carrier protein]-C-terminal Gly-Gly-AMP + S-sulfanyl-L-cysteinyl-[cysteine desulfurase] + AH2 = [ThiS sulfur-carrier protein]-C-terminal-Gly-aminoethanethioate + L-cysteinyl-[cysteine desulfurase] + A + AMP + 2 H(+). Its pathway is cofactor biosynthesis; thiamine diphosphate biosynthesis. Its function is as follows. Catalyzes the ATP-dependent transfer of a sulfur to tRNA to produce 4-thiouridine in position 8 of tRNAs, which functions as a near-UV photosensor. Also catalyzes the transfer of sulfur to the sulfur carrier protein ThiS, forming ThiS-thiocarboxylate. This is a step in the synthesis of thiazole, in the thiamine biosynthesis pathway. The sulfur is donated as persulfide by IscS. In Streptococcus pyogenes serotype M1, this protein is Probable tRNA sulfurtransferase.